The sequence spans 89 residues: UPF0367 protein MAE_19160 (89 aa).

It belongs to the UPF0367 family.

The sequence is that of UPF0367 protein MAE_19160 from Microcystis aeruginosa (strain NIES-843 / IAM M-2473).